Consider the following 665-residue polypeptide: Syntabulin (665 aa).

Basic and acidic residues predominate over residues 1–22; the sequence is MGPLRESKKEQRVQHQEKEISR. The tract at residues 1-271 is disordered; that stretch reads MGPLRESKKE…GVKPPNPEQY (271 aa). Residues 2 to 421 form a sufficient for interaction with KIF5B region; it reads GPLRESKKEQ…DKLPDGLSLE (420 aa). Residues 35–52 show a composition bias toward low complexity; that stretch reads PQQQQQQQNKVSPASESP. Serine 54 carries the post-translational modification Phosphoserine. Low complexity predominate over residues 61 to 77; it reads FNPSSSGRSARTISSNS. Residues 85–101 show a composition bias toward polar residues; the sequence is CPSSQSVSPVKTPSDTG. The residue at position 111 (serine 111) is a Phosphoserine. The span at 141-162 shows a compositional bias: low complexity; it reads GGIIKPGSEADFSSSSSTGSIS. The span at 168–180 shows a compositional bias: polar residues; it reads MSTTGNKRASFSR. Low complexity predominate over residues 225–245; that stretch reads SYAPSSPSSSNSGSYKGSDCS. Residues 275-357 are a coiled coil; it reads LQQKEVTVRH…MRSSLADKDK (83 aa). Residues 314-421 are sufficient for interaction with STX1A; sequence REDWIEEECH…DKLPDGLSLE (108 aa). Phosphoserine occurs at positions 400 and 557. Residues 609–629 traverse the membrane as a helical segment; the sequence is FLVDLLAVAAPVVPTVLWAFS.

In terms of assembly, interacts with STX1A and KIF5B.

The protein resides in the golgi apparatus membrane. Its function is as follows. Part of a kinesin motor-adapter complex that is critical for the anterograde axonal transport of active zone components and contributes to activity-dependent presynaptic assembly during neuronal development. This chain is Syntabulin (Sybu), found in Mus musculus (Mouse).